A 457-amino-acid chain; its full sequence is Argininosuccinate lyase (457 aa).

The protein belongs to the lyase 1 family. Argininosuccinate lyase subfamily.

It is found in the cytoplasm. It catalyses the reaction 2-(N(omega)-L-arginino)succinate = fumarate + L-arginine. Its pathway is amino-acid biosynthesis; L-arginine biosynthesis; L-arginine from L-ornithine and carbamoyl phosphate: step 3/3. In Salmonella arizonae (strain ATCC BAA-731 / CDC346-86 / RSK2980), this protein is Argininosuccinate lyase.